Reading from the N-terminus, the 146-residue chain is Large ribosomal subunit protein uL13 (146 aa).

Belongs to the universal ribosomal protein uL13 family. As to quaternary structure, part of the 50S ribosomal subunit.

Its function is as follows. This protein is one of the early assembly proteins of the 50S ribosomal subunit, although it is not seen to bind rRNA by itself. It is important during the early stages of 50S assembly. The polypeptide is Large ribosomal subunit protein uL13 (Malacoplasma penetrans (strain HF-2) (Mycoplasma penetrans)).